A 173-amino-acid polypeptide reads, in one-letter code: MHVDIVPVGEVSAQVKREASDGLRSVYDCEVSMHEPQSIPAGAYDGDRDQYRAEEFIDLARRVGSGGKNIAITPKDLFYRRRNYVFGLAYLGGSGSVISTYRLQTSSDGGFSNRSAGEIFSQRVRKEVVHEVGHTLGLEHCDNKRCVMNFSPTVRQVDVKEVSLCGSCQRNVL.

H130 serves as a coordination point for Zn(2+). The Proton acceptor role is filled by E131. Zn(2+) is bound by residues H134, H140, C141, C146, C165, and C168.

It belongs to the peptidase M54 family. As to quaternary structure, monomer. Zn(2+) is required as a cofactor.

Probable zinc metalloprotease whose natural substrate is unknown. In Haloarcula marismortui (strain ATCC 43049 / DSM 3752 / JCM 8966 / VKM B-1809) (Halobacterium marismortui), this protein is Archaemetzincin.